A 448-amino-acid chain; its full sequence is C4-dicarboxylate transport protein (448 aa).

8 helical membrane passes run 20-38, 53-75, 88-110, 161-178, 199-220, 230-252, 325-347, and 362-384; these read LYFQVLVAIIAGIALGHFY, IRLVKMIIAPVIFLTVATGIAGM, AMIYFLVFSTLALIVGLIVANTV, ILQVLFFSVLFGIALGIV, LVAILMKAAPIGAFGAMAFTIG, LAMLIGTFYITSALFVFVVLGAV, LFIAQATGIHLSFGEQILLLLVA, and FITLAATLSVVPSVPVAGMALIL.

Belongs to the dicarboxylate/amino acid:cation symporter (DAACS) (TC 2.A.23) family.

The protein resides in the cell inner membrane. Functionally, responsible for the transport of dicarboxylates such as succinate, fumarate, and malate from the periplasm across the membrane. This chain is C4-dicarboxylate transport protein, found in Agrobacterium fabrum (strain C58 / ATCC 33970) (Agrobacterium tumefaciens (strain C58)).